Here is a 203-residue protein sequence, read N- to C-terminus: Thymidylate kinase (203 aa).

An ATP-binding site is contributed by 9 to 16; that stretch reads GPEGSGKT.

Belongs to the thymidylate kinase family.

It carries out the reaction dTMP + ATP = dTDP + ADP. Its function is as follows. Phosphorylation of dTMP to form dTDP in both de novo and salvage pathways of dTTP synthesis. In Staphylococcus haemolyticus (strain JCSC1435), this protein is Thymidylate kinase.